The following is a 440-amino-acid chain: Cytochrome c biogenesis protein Ccs1 (440 aa).

3 helical membrane-spanning segments follow: residues 25–45 (LQFSIILLLLIAIFSTIGTVI), 84–104 (TWWFLSLLFIFSLSLFTCSIS), and 170–190 (LAPIFVHGSIILLLTGSVLGL).

It belongs to the Ccs1/CcsB family. As to quaternary structure, may interact with CcsA.

The protein localises to the plastid. It localises to the chloroplast thylakoid membrane. In terms of biological role, required during biogenesis of c-type cytochromes (cytochrome c6 and cytochrome f) at the step of heme attachment. The polypeptide is Cytochrome c biogenesis protein Ccs1 (Pyropia yezoensis (Susabi-nori)).